We begin with the raw amino-acid sequence, 251 residues long: Cathelicidin-B1 (251 aa).

An N-terminal signal peptide occupies residues methionine 1–alanine 20. Residues valine 21 to glutamine 211 constitute a propeptide that is removed on maturation. The segment at threonine 29 to isoleucine 109 is disordered. Intrachain disulfides connect cysteine 172–cysteine 181 and cysteine 189–cysteine 205.

The protein belongs to the cathelicidin family. In terms of tissue distribution, detected in bursa of Fabricius, in filamentous structures surrounding the basal and lateral surfaces of bursal M cells (at protein level). Detected in bursa of Fabricius, in secretory enterocytes of the interfollicular bursal epithelium, but not in M cells.

It localises to the secreted. Its function is as follows. Has potent antimicrobial activity against Gram-positive and Gram-negative bacteria (in vitro). May play a role in the innate immune response. In Gallus gallus (Chicken), this protein is Cathelicidin-B1 (CATHB1).